A 37-amino-acid chain; its full sequence is Natriuretic peptide PNP (37 aa).

A disulfide bridge links C14 with C30.

In terms of tissue distribution, expressed by the venom gland.

It is found in the secreted. In terms of biological role, increases urine flow and decreases blood pressure when administered to rats by intravenous injection. Inhibits thrombin-induced platelet aggregation. Stimulates cGMP production via the natriuretic peptide receptor-A (NPR1). The polypeptide is Natriuretic peptide PNP (Pseudocerastes persicus (Persian horned viper)).